Here is a 356-residue protein sequence, read N- to C-terminus: Deoxyribonuclease-2-beta (356 aa).

Positions 1–22 (MTAQPLKAALPLLFVALSGVLG) are cleaved as a signal peptide. 4 N-linked (GlcNAc...) asparagine glycosylation sites follow: asparagine 77, asparagine 98, asparagine 114, and asparagine 273.

The protein belongs to the DNase II family. Liver specific.

Its subcellular location is the lysosome. It carries out the reaction Endonucleolytic cleavage to nucleoside 3'-phosphates and 3'-phosphooligonucleotide end-products.. Its function is as follows. Hydrolyzes DNA under acidic conditions. Does not require divalent cations for activity. Participates in the degradation of nuclear DNA during lens cell differentiation. This Rattus norvegicus (Rat) protein is Deoxyribonuclease-2-beta (Dnase2b).